The chain runs to 862 residues: S-layer protein EA1 (862 aa).

An N-terminal signal peptide occupies residues Met-1 to Ala-29. 3 consecutive SLH domains span residues Ala-30–Pro-93, Ser-94–Gly-151, and Glu-152–Gln-214.

The protein resides in the secreted. It is found in the cell wall. Its subcellular location is the S-layer. The S-layer is a paracrystalline mono-layered assembly of proteins which coat the surface of bacteria. The chain is S-layer protein EA1 (eag) from Bacillus anthracis.